A 293-amino-acid polypeptide reads, in one-letter code: Small ribosomal subunit biogenesis GTPase RsgA (293 aa).

A CP-type G domain is found at 63–223 (QNELVRPPVA…VADTPGFSAL (161 aa)). GTP-binding positions include 112 to 115 (SKID) and 166 to 174 (GQSGVGKSS). The Zn(2+) site is built by C247, C252, H254, and C260.

This sequence belongs to the TRAFAC class YlqF/YawG GTPase family. RsgA subfamily. In terms of assembly, monomer. Associates with 30S ribosomal subunit, binds 16S rRNA. It depends on Zn(2+) as a cofactor.

Its subcellular location is the cytoplasm. Functionally, one of several proteins that assist in the late maturation steps of the functional core of the 30S ribosomal subunit. Helps release RbfA from mature subunits. May play a role in the assembly of ribosomal proteins into the subunit. Circularly permuted GTPase that catalyzes slow GTP hydrolysis, GTPase activity is stimulated by the 30S ribosomal subunit. The sequence is that of Small ribosomal subunit biogenesis GTPase RsgA from Geobacillus thermodenitrificans (strain NG80-2).